Here is a 516-residue protein sequence, read N- to C-terminus: Gamma-aminobutyrate transaminase 1, mitochondrial (516 aa).

The transit peptide at 1–47 (MVIARGLLRSNASSSSSQAINLLKYVTSTGSLQGHTQNLCDASTRHF) directs the protein to the mitochondrion. A pyridoxal 5'-phosphate-binding site is contributed by 171–172 (GS). Tyrosine 204 serves as a coordination point for substrate. Residue aspartate 311 coordinates pyridoxal 5'-phosphate. Lysine 340 is a substrate binding site. N6-(pyridoxal phosphate)lysine is present on lysine 340.

It belongs to the class-III pyridoxal-phosphate-dependent aminotransferase family. As to expression, expressed in roots, stems and panicles.

Its subcellular location is the mitochondrion. It catalyses the reaction 4-aminobutanoate + pyruvate = succinate semialdehyde + L-alanine. The catalysed reaction is 4-aminobutanoate + glyoxylate = succinate semialdehyde + glycine. Transaminase that degrades gamma-amino butyric acid (GABA) and uses pyruvate as amino-group acceptor, but not 2-oxoglutarate. Not involved in the interaction with blast fungus. This is Gamma-aminobutyrate transaminase 1, mitochondrial (OSL2) from Oryza sativa subsp. japonica (Rice).